A 568-amino-acid polypeptide reads, in one-letter code: Zinc finger protein 648 (568 aa).

A compositionally biased stretch (basic and acidic residues) spans 1 to 11 (MAQVDSQDRWG). A disordered region spans residues 1–106 (MAQVDSQDRW…MSGKASWSRD (106 aa)). C2H2-type zinc fingers lie at residues 279-301 (YACE…RRLH), 307-329 (YQCS…IRTH), 335-358 (YPCP…RNMH), 364-386 (FPCS…QRTH), 392-414 (FRCP…QRVH), 420-442 (FPCP…QTLH), 448-470 (FKCA…QRIH), 476-498 (FPCT…QQIH), 504-526 (FLCA…IRMH), and 532-554 (YQCE…RAKH). The segment at 548-568 (QRHRAKHGTCKKEPIPSSSDE) is disordered.

Belongs to the krueppel C2H2-type zinc-finger protein family.

Its subcellular location is the nucleus. Functionally, may be involved in transcriptional regulation. The protein is Zinc finger protein 648 (ZNF648) of Homo sapiens (Human).